The chain runs to 460 residues: Keratin, type I cytoskeletal 27 (460 aa).

Residues 1-83 form a head region; it reads MSVRFSSASR…GNEHGLLSGN (83 aa). Residues 84–119 are coil 1A; the sequence is EKVTMQNLNDRLASYLDNVRALEEANADLEQKIKGW. Positions 84–399 constitute an IF rod domain; the sequence is EKVTMQNLND…RLIDGEDGSC (316 aa). The tract at residues 120 to 141 is linker 1; it reads YEKFGPGSCRGLDHDYSRYFTV. The segment at 142-233 is coil 1B; sequence IDDLRNQIIS…KNHEEEMKAL (92 aa). Residues 234–256 are linker 12; the sequence is QCAAGGNVNVEMNAAPGVDLTVL. The interval 257–395 is coil 2; sequence LNNMRAEYEA…ETYCRLIDGE (139 aa). Residues 396–460 are tail; it reads DGSCAKSKGY…NVKSEQRVPS (65 aa). The tract at residues 435–460 is disordered; sequence LSSRVHSVEEKSTKVNNVKSEQRVPS. Residues 448-460 show a composition bias toward polar residues; it reads KVNNVKSEQRVPS.

The protein belongs to the intermediate filament family. Heterotetramer of two type I and two type II keratins. Interacts with KRT6A to form filaments.

The protein localises to the cytoplasm. Its function is as follows. Essential for the proper assembly of type I and type II keratin protein complexes and formation of keratin intermediate filaments in the inner root sheath (irs). In Bos taurus (Bovine), this protein is Keratin, type I cytoskeletal 27.